Consider the following 24-residue polypeptide: Large ribosomal subunit protein uL30 (24 aa).

Belongs to the universal ribosomal protein uL30 family. In terms of assembly, part of the 50S ribosomal subunit.

This is Large ribosomal subunit protein uL30 (rpmD) from Ectopseudomonas mendocina (Pseudomonas mendocina).